Here is a 436-residue protein sequence, read N- to C-terminus: UPF0761 membrane protein Bxeno_A3061 (436 aa).

6 helical membrane passes run 42-62 (LVPL…FASF), 96-116 (GLTT…MMTV), 136-156 (ILVY…SLSI), 180-200 (ALAG…YVYL), 210-230 (AVIG…GFGY), and 241-261 (VYGA…CWFI).

This sequence belongs to the UPF0761 family.

It localises to the cell inner membrane. This chain is UPF0761 membrane protein Bxeno_A3061, found in Paraburkholderia xenovorans (strain LB400).